The sequence spans 228 residues: Uracil-DNA glycosylase (228 aa).

The active-site Proton acceptor is Asp-64.

It belongs to the uracil-DNA glycosylase (UDG) superfamily. UNG family.

The protein localises to the cytoplasm. It catalyses the reaction Hydrolyzes single-stranded DNA or mismatched double-stranded DNA and polynucleotides, releasing free uracil.. Excises uracil residues from the DNA which can arise as a result of misincorporation of dUMP residues by DNA polymerase or due to deamination of cytosine. This Yersinia pseudotuberculosis serotype O:1b (strain IP 31758) protein is Uracil-DNA glycosylase.